The sequence spans 441 residues: Capsid protein (441 aa).

The segment at 26 to 63 (DSKKKQPIYQNSSESEESETENKNFIYDFSSEEDFEEP) is disordered. Residues 77 to 79 (KRK) carry the Nuclear localization signal motif. The CCHC-type zinc finger occupies 381–398 (CQCWLCHEEGHYANECPK).

This sequence belongs to the caulimoviridae capsid protein family. Interacts (via nuclear localization signal) with host importin alpha.

The protein resides in the virion. It localises to the host nucleus. In terms of biological role, self assembles to form an icosahedral capsid, about 50 nm in diameter, nm, composed of 420 subunits of the viral capsid protein. The capsid encapsulates the genomic dsDNA. Following virus entry into host cell, provides nuclear import of the viral genome. Virus particles do not enter the nucleus, but dock at the nuclear membrane through the interaction with host importins. In Soybean chlorotic mottle virus, this protein is Capsid protein.